A 193-amino-acid chain; its full sequence is dCTP deaminase (193 aa).

Residues 110–115 (RSSLAR), aspartate 128, 136–138 (VLE), tyrosine 171, lysine 178, and glutamine 182 contribute to the dCTP site. Glutamate 138 acts as the Proton donor/acceptor in catalysis.

Belongs to the dCTP deaminase family. In terms of assembly, homotrimer.

It catalyses the reaction dCTP + H2O + H(+) = dUTP + NH4(+). The protein operates within pyrimidine metabolism; dUMP biosynthesis; dUMP from dCTP (dUTP route): step 1/2. Its function is as follows. Catalyzes the deamination of dCTP to dUTP. This Tolumonas auensis (strain DSM 9187 / NBRC 110442 / TA 4) protein is dCTP deaminase.